The sequence spans 399 residues: Dual-specificity RNA methyltransferase RlmN (399 aa).

The Proton acceptor role is filled by E122. A Radical SAM core domain is found at 128-371 (ETDRGTLCVS…VRTPRGRDIL (244 aa)). C135 and C374 are joined by a disulfide. [4Fe-4S] cluster is bound by residues C142, C146, and C149. S-adenosyl-L-methionine-binding positions include 200–201 (GE), S232, 254–256 (SLH), and N331. Catalysis depends on C374, which acts as the S-methylcysteine intermediate.

The protein belongs to the radical SAM superfamily. RlmN family. [4Fe-4S] cluster serves as cofactor.

The protein localises to the cytoplasm. It carries out the reaction adenosine(2503) in 23S rRNA + 2 reduced [2Fe-2S]-[ferredoxin] + 2 S-adenosyl-L-methionine = 2-methyladenosine(2503) in 23S rRNA + 5'-deoxyadenosine + L-methionine + 2 oxidized [2Fe-2S]-[ferredoxin] + S-adenosyl-L-homocysteine. The enzyme catalyses adenosine(37) in tRNA + 2 reduced [2Fe-2S]-[ferredoxin] + 2 S-adenosyl-L-methionine = 2-methyladenosine(37) in tRNA + 5'-deoxyadenosine + L-methionine + 2 oxidized [2Fe-2S]-[ferredoxin] + S-adenosyl-L-homocysteine. Specifically methylates position 2 of adenine 2503 in 23S rRNA and position 2 of adenine 37 in tRNAs. m2A2503 modification seems to play a crucial role in the proofreading step occurring at the peptidyl transferase center and thus would serve to optimize ribosomal fidelity. This chain is Dual-specificity RNA methyltransferase RlmN, found in Rhodopseudomonas palustris (strain HaA2).